The chain runs to 308 residues: Aspartate carbamoyltransferase catalytic subunit (308 aa).

Arg57 and Thr58 together coordinate carbamoyl phosphate. An L-aspartate-binding site is contributed by Lys86. Carbamoyl phosphate-binding residues include Arg107, His135, and Gln138. Residues Arg168 and Arg228 each contribute to the L-aspartate site. The carbamoyl phosphate site is built by Leu267 and Pro268.

Belongs to the aspartate/ornithine carbamoyltransferase superfamily. ATCase family. Heterododecamer (2C3:3R2) of six catalytic PyrB chains organized as two trimers (C3), and six regulatory PyrI chains organized as three dimers (R2).

It carries out the reaction carbamoyl phosphate + L-aspartate = N-carbamoyl-L-aspartate + phosphate + H(+). The protein operates within pyrimidine metabolism; UMP biosynthesis via de novo pathway; (S)-dihydroorotate from bicarbonate: step 2/3. In terms of biological role, catalyzes the condensation of carbamoyl phosphate and aspartate to form carbamoyl aspartate and inorganic phosphate, the committed step in the de novo pyrimidine nucleotide biosynthesis pathway. This chain is Aspartate carbamoyltransferase catalytic subunit, found in Leptospira interrogans serogroup Icterohaemorrhagiae serovar Lai (strain 56601).